The sequence spans 376 residues: Putative glutamate--cysteine ligase 2-1 (376 aa).

The protein belongs to the glutamate--cysteine ligase type 2 family. YbdK subfamily.

It catalyses the reaction L-cysteine + L-glutamate + ATP = gamma-L-glutamyl-L-cysteine + ADP + phosphate + H(+). ATP-dependent carboxylate-amine ligase which exhibits weak glutamate--cysteine ligase activity. In Rubrobacter xylanophilus (strain DSM 9941 / JCM 11954 / NBRC 16129 / PRD-1), this protein is Putative glutamate--cysteine ligase 2-1.